An 85-amino-acid chain; its full sequence is Large ribosomal subunit protein bL31B (85 aa).

It belongs to the bacterial ribosomal protein bL31 family. Type B subfamily. As to quaternary structure, part of the 50S ribosomal subunit.

This chain is Large ribosomal subunit protein bL31B, found in Staphylococcus epidermidis (strain ATCC 35984 / DSM 28319 / BCRC 17069 / CCUG 31568 / BM 3577 / RP62A).